The following is a 46-amino-acid chain: Bacteriocin acidocin 8912 (46 aa).

A propeptide spanning residues M1 to G20 is cleaved from the precursor.

It localises to the secreted. Functionally, has a bactericidal effect on sensitive cells but not a bacteriolytic effect. This chain is Bacteriocin acidocin 8912 (acdT), found in Lactobacillus acidophilus.